Reading from the N-terminus, the 277-residue chain is 3-methyl-2-oxobutanoate hydroxymethyltransferase (277 aa).

Mg(2+)-binding residues include D43 and D82. Residues 43-44 (DS), D82, and K112 contribute to the 3-methyl-2-oxobutanoate site. E114 serves as a coordination point for Mg(2+). E181 (proton acceptor) is an active-site residue.

This sequence belongs to the PanB family. In terms of assembly, homodecamer; pentamer of dimers. The cofactor is Mg(2+).

Its subcellular location is the cytoplasm. The enzyme catalyses 3-methyl-2-oxobutanoate + (6R)-5,10-methylene-5,6,7,8-tetrahydrofolate + H2O = 2-dehydropantoate + (6S)-5,6,7,8-tetrahydrofolate. It functions in the pathway cofactor biosynthesis; (R)-pantothenate biosynthesis; (R)-pantoate from 3-methyl-2-oxobutanoate: step 1/2. Functionally, catalyzes the reversible reaction in which hydroxymethyl group from 5,10-methylenetetrahydrofolate is transferred onto alpha-ketoisovalerate to form ketopantoate. This is 3-methyl-2-oxobutanoate hydroxymethyltransferase from Exiguobacterium sp. (strain ATCC BAA-1283 / AT1b).